Here is a 73-residue protein sequence, read N- to C-terminus: Translational regulator CsrA (73 aa).

It belongs to the CsrA/RsmA family. In terms of assembly, homodimer; the beta-strands of each monomer intercalate to form a hydrophobic core, while the alpha-helices form wings that extend away from the core.

It is found in the cytoplasm. In terms of biological role, a translational regulator that binds mRNA to regulate translation initiation and/or mRNA stability. Usually binds in the 5'-UTR at or near the Shine-Dalgarno sequence preventing ribosome-binding, thus repressing translation. Its main target seems to be the major flagellin gene, while its function is anatagonized by FliW. This is Translational regulator CsrA from Lachnospira eligens (strain ATCC 27750 / DSM 3376 / VPI C15-48 / C15-B4) (Eubacterium eligens).